The sequence spans 535 residues: CTP synthase (535 aa).

An amidoligase domain region spans residues 1–267; it reads MTKYIFVTGG…DQIVCDHLKL (267 aa). Ser-13 lines the CTP pocket. Position 13 (Ser-13) interacts with UTP. 14–19 contributes to the ATP binding site; sequence SLGKGI. Tyr-54 contacts L-glutamine. Asp-71 provides a ligand contact to ATP. Residues Asp-71 and Glu-141 each contribute to the Mg(2+) site. CTP contacts are provided by residues 148 to 150, 188 to 193, and Lys-224; these read DIE and KTKPTQ. UTP contacts are provided by residues 188–193 and Lys-224; that span reads KTKPTQ. Residues 292 to 534 form the Glutamine amidotransferase type-1 domain; the sequence is RIALVGKYVE…VQASITNKES (243 aa). L-glutamine is bound at residue Gly-354. Cys-381 serves as the catalytic Nucleophile; for glutamine hydrolysis. L-glutamine contacts are provided by residues 382 to 385, Glu-405, and Arg-462; that span reads LGMQ. Residues His-507 and Glu-509 contribute to the active site.

It belongs to the CTP synthase family. Homotetramer.

It carries out the reaction UTP + L-glutamine + ATP + H2O = CTP + L-glutamate + ADP + phosphate + 2 H(+). The enzyme catalyses L-glutamine + H2O = L-glutamate + NH4(+). The catalysed reaction is UTP + NH4(+) + ATP = CTP + ADP + phosphate + 2 H(+). The protein operates within pyrimidine metabolism; CTP biosynthesis via de novo pathway; CTP from UDP: step 2/2. Its activity is regulated as follows. Allosterically activated by GTP, when glutamine is the substrate; GTP has no effect on the reaction when ammonia is the substrate. The allosteric effector GTP functions by stabilizing the protein conformation that binds the tetrahedral intermediate(s) formed during glutamine hydrolysis. Inhibited by the product CTP, via allosteric rather than competitive inhibition. In terms of biological role, catalyzes the ATP-dependent amination of UTP to CTP with either L-glutamine or ammonia as the source of nitrogen. Regulates intracellular CTP levels through interactions with the four ribonucleotide triphosphates. This chain is CTP synthase, found in Bacillus cytotoxicus (strain DSM 22905 / CIP 110041 / 391-98 / NVH 391-98).